The sequence spans 438 residues: sn-glycerol-3-phosphate-binding periplasmic protein UgpB (438 aa).

The first 23 residues, 1–23, serve as a signal peptide directing secretion; the sequence is MKPLHYTASALALGLALMGNAQA. Residues Tyr-65, Glu-89, Ser-144, Ser-270, Gly-307, Tyr-346, and Arg-397 each contribute to the sn-glycerol 3-phosphate site.

It belongs to the bacterial solute-binding protein 1 family. The complex is composed of two ATP-binding proteins (UgpC), two transmembrane proteins (UgpA and UgpE) and a solute-binding protein (UgpB).

The protein resides in the periplasm. Its function is as follows. Part of the ABC transporter complex UgpBAEC involved in sn-glycerol-3-phosphate (G3P) import. Binds G3P. The sequence is that of sn-glycerol-3-phosphate-binding periplasmic protein UgpB (ugpB) from Shigella flexneri.